The chain runs to 305 residues: Probable aspartoacylase (305 aa).

Zn(2+) contacts are provided by H13 and E16. Substrate contacts are provided by residues R55 and 62–63; that span reads NR. Residue H105 coordinates Zn(2+). Residues E163 and Y273 each contribute to the substrate site.

The protein belongs to the AspA/AstE family. Aspartoacylase subfamily. Requires Zn(2+) as cofactor.

It catalyses the reaction an N-acyl-L-aspartate + H2O = a carboxylate + L-aspartate. This Prochlorococcus marinus (strain NATL1A) protein is Probable aspartoacylase.